Here is a 42-residue protein sequence, read N- to C-terminus: Iota-conotoxin-like R11.1 (42 aa).

Intrachain disulfides connect Cys5/Cys19, Cys12/Cys22, Cys18/Cys27, and Cys21/Cys36.

It belongs to the conotoxin I1 superfamily. As to expression, expressed by the venom duct.

The protein resides in the secreted. Its function is as follows. Iota-conotoxins bind to voltage-gated sodium channels (Nav) and act as agonists by shifting the voltage-dependence of activation to more hyperpolarized levels. Produces general excitatory symptoms. The protein is Iota-conotoxin-like R11.1 of Conus radiatus (Rayed cone).